Reading from the N-terminus, the 121-residue chain is NAD(P)H-quinone oxidoreductase subunit 3, chloroplastic (121 aa).

The next 3 membrane-spanning stretches (helical) occupy residues phenylalanine 10–phenylalanine 30, methionine 65–methionine 85, and leucine 90–valine 110.

It belongs to the complex I subunit 3 family. NDH is composed of at least 16 different subunits, 5 of which are encoded in the nucleus.

The protein localises to the plastid. The protein resides in the chloroplast thylakoid membrane. The catalysed reaction is a plastoquinone + NADH + (n+1) H(+)(in) = a plastoquinol + NAD(+) + n H(+)(out). It catalyses the reaction a plastoquinone + NADPH + (n+1) H(+)(in) = a plastoquinol + NADP(+) + n H(+)(out). Its function is as follows. NDH shuttles electrons from NAD(P)H:plastoquinone, via FMN and iron-sulfur (Fe-S) centers, to quinones in the photosynthetic chain and possibly in a chloroplast respiratory chain. The immediate electron acceptor for the enzyme in this species is believed to be plastoquinone. Couples the redox reaction to proton translocation, and thus conserves the redox energy in a proton gradient. The chain is NAD(P)H-quinone oxidoreductase subunit 3, chloroplastic from Physcomitrium patens (Spreading-leaved earth moss).